Here is a 311-residue protein sequence, read N- to C-terminus: Pyrimidine-specific ribonucleoside hydrolase RihA (311 aa).

His-240 is a catalytic residue.

This sequence belongs to the IUNH family. RihA subfamily.

Its function is as follows. Hydrolyzes cytidine or uridine to ribose and cytosine or uracil, respectively. In Salmonella gallinarum (strain 287/91 / NCTC 13346), this protein is Pyrimidine-specific ribonucleoside hydrolase RihA.